A 51-amino-acid polypeptide reads, in one-letter code: Small ribosomal subunit protein eS31 (51 aa).

Positions 21, 24, 39, and 42 each coordinate Zn(2+). Residues 21 to 42 form a C4-type zinc finger; sequence CVRCSNGVFMADHGDRYACGKC.

Belongs to the eukaryotic ribosomal protein eS31 family. In terms of assembly, part of the 30S ribosomal subunit. The cofactor is Zn(2+).

This is Small ribosomal subunit protein eS31 from Methanothermobacter thermautotrophicus (strain ATCC 29096 / DSM 1053 / JCM 10044 / NBRC 100330 / Delta H) (Methanobacterium thermoautotrophicum).